A 1581-amino-acid polypeptide reads, in one-letter code: Mediator of RNA polymerase II transcription subunit 1 (1581 aa).

The segment at 1-670 (MKAQGETEES…YGSSPLERQN (670 aa)) is interaction with the Mediator complex and THRA. Positions 16-590 (MSSLLERLHA…SIKDRHESVG (575 aa)) are interaction with ESR1. 2 interaction with the Mediator complex regions span residues 108–212 (FYVE…GYLT) and 215–390 (SGGH…SLQG). The segment at 405-644 (PLILNLIRHQ…MAGNTKNHPM (240 aa)) is interaction with THRA. The tract at residues 542 to 788 (PASSPGYGMT…TDILSDIAEE (247 aa)) is interaction with VDR. Phosphoserine is present on serine 588. The LXXLL motif 1 motif lies at 604 to 608 (LTSLL). 4 disordered regions span residues 609–705 (QITG…HQTE), 791–819 (KLPS…QSTL), 868–895 (LSNS…DDFK), and 947–1566 (EHHS…DFMI). Pro residues predominate over residues 622 to 632 (PTPPHHTPPPV). Positions 622–701 (PTPPHHTPPP…SSRLPPEKPK (80 aa)) are interaction with PPARGC1A and THRA. Positions 645-649 (LMNLL) match the LXXLL motif 2 motif. Over residues 655-675 (QDFSTLYGSSPLERQNSSSGS) the composition is skewed to polar residues. The tract at residues 656-1065 (DFSTLYGSSP…TPPIPKITIQ (410 aa)) is interaction with ESR1. Serine 664 is modified (phosphoserine). Residues 681 to 715 (CSGSNKTKKKESSRLPPEKPKHQTEDDFQRELFSM) form an interaction with GATA1 region. Positions 690 to 705 (KESSRLPPEKPKHQTE) are enriched in basic and acidic residues. Serine 794 is subject to Phosphoserine. Threonine 804 carries the phosphothreonine modification. The segment covering 807–819 (RDSSSSGHSQSTL) has biased composition (polar residues). The Integrase domain-binding motif (IBM) motif lies at 874-901 (QSGFGEEYFDESSQSGDNDDFKGFASQA). Serine 886 and serine 952 each carry phosphoserine. The span at 962 to 973 (LGKEKTQKRVKE) shows a compositional bias: basic and acidic residues. The residue at position 1031 (threonine 1031) is a Phosphothreonine; by MAPK1 or MAPK3. Residues 1033-1050 (PTSTGGSKSPGSSGRSQT) show a composition bias toward low complexity. Threonine 1050 and threonine 1056 each carry phosphothreonine. Composition is skewed to low complexity over residues 1077-1093 (SSHS…SSGS), 1100-1111 (SSSSSSSSASTS), and 1119-1156 (SEGS…PGSS). Serine 1156 bears the Phosphoserine mark. Residues 1162 to 1195 (GLSSGSSSTKMKPQGKPSSLMNPSLSKPNISPSH) show a composition bias toward polar residues. Position 1177 is an N6-acetyllysine (lysine 1177). At serine 1207 the chain carries Phosphoserine. Threonine 1215 carries the post-translational modification Phosphothreonine. 2 stretches are compositionally biased toward low complexity: residues 1218 to 1227 (SSKAKSPISS) and 1234 to 1293 (MSGT…SKGK). Residue serine 1223 is modified to Phosphoserine. The segment at 1249–1421 (LGSSGSLSQK…KPGESSGEGL (173 aa)) is interaction with TP53. Serine 1302 carries the post-translational modification Phosphoserine. Residues 1330 to 1345 (GVSTNSSSHPMSSKHN) are compositionally biased toward polar residues. Serine 1347 is subject to Phosphoserine. The segment covering 1352–1364 (QGKREKSDKDKSK) has biased composition (basic and acidic residues). Phosphoserine is present on residues serine 1403 and serine 1433. Composition is skewed to polar residues over residues 1425–1440 (MASS…SGST) and 1448–1482 (PSHS…SPSS). The residue at position 1440 (threonine 1440) is a Phosphothreonine. Position 1457 is a phosphothreonine; by MAPK1 or MAPK3 (threonine 1457). Residues serine 1463, serine 1465, serine 1479, serine 1481, and serine 1482 each carry the phosphoserine modification. The span at 1496 to 1505 (KHKKHKKEKK) shows a compositional bias: basic residues. Residues 1506 to 1522 (KVKDKDRDRDRDKDRDK) are compositionally biased toward basic and acidic residues. Lysine 1529 carries the post-translational modification N6-acetyllysine. Residues 1533 to 1552 (WSKSPISSDQSLSMTSNTIL) show a composition bias toward polar residues.

The protein belongs to the Mediator complex subunit 1 family. In terms of assembly, component of the Mediator complex, which is composed of MED1, MED4, MED6, MED7, MED8, MED9, MED10, MED11, MED12, MED13, MED13L, MED14, MED15, MED16, MED17, MED18, MED19, MED20, MED21, MED22, MED23, MED24, MED25, MED26, MED27, MED29, MED30, MED31, CCNC, CDK8 and CDC2L6/CDK11. The MED12, MED13, CCNC and CDK8 subunits form a distinct module termed the CDK8 module. Mediator containing the CDK8 module is less active than Mediator lacking this module in supporting transcriptional activation. Individual preparations of the Mediator complex lacking one or more distinct subunits have been variously termed ARC, CRSP, DRIP, PC2, SMCC and TRAP. This subunit specifically interacts with a number of nuclear receptors in a ligand-dependent fashion including AR, ESR1, ESR2, PPARA, PPARG, RORA, RXRA, RXRG, THRA, THRB and VDR. Interacts with CTNNB1, GABPA, GLI3, PPARGC1A and TP53. Interacts with GATA1 and YWHAH. Interacts with CLOCK; this interaction requires the presence of THRAP3. Interacts with CCAR1. Interacts with NR4A3. Interacts (via IBM motif) with PSIP1 (via IBD domain); phosphorylation increases its affinity for PSIP1. Interacts with USP22. Phosphorylated by MAPK1 or MAPK3 during G2/M phase which may enhance protein stability and promote entry into the nucleolus. Phosphorylation increases its interaction with PSIP1.

The protein resides in the nucleus. In terms of biological role, component of the Mediator complex, a coactivator involved in the regulated transcription of nearly all RNA polymerase II-dependent genes. Mediator functions as a bridge to convey information from gene-specific regulatory proteins to the basal RNA polymerase II transcription machinery. Mediator is recruited to promoters by direct interactions with regulatory proteins and serves as a scaffold for the assembly of a functional preinitiation complex with RNA polymerase II and the general transcription factors. Acts as a coactivator for GATA1-mediated transcriptional activation during erythroid differentiation of K562 erythroleukemia cells. The protein is Mediator of RNA polymerase II transcription subunit 1 (MED1) of Pongo abelii (Sumatran orangutan).